Consider the following 272-residue polypeptide: Acidic leucine-rich nuclear phosphoprotein 32-related protein 2 (272 aa).

LRR repeat units follow at residues 57–78 (SLEE…PRLP), 79–100 (ALRR…AAVA), and 106–127 (TLRH…APLA). The LRRCT domain occupies 139-184 (CPVTKAKGYRDKVFALIPSLKFLDGMDAEGNDCLDSDDEEDEEEDE). The tract at residues 163–272 (GMDAEGNDCL…DSEDDANGDN (110 aa)) is disordered. The span at 164–241 (MDAEGNDCLD…DEAGADEEDE (78 aa)) shows a compositional bias: acidic residues. Polar residues predominate over residues 248–257 (SKGSSGSAQP).

It belongs to the ANP32 family.

This chain is Acidic leucine-rich nuclear phosphoprotein 32-related protein 2, found in Oryza sativa subsp. japonica (Rice).